The following is an 89-amino-acid chain: ATP synthase subunit H, mitochondrial (89 aa).

In terms of assembly, F-type ATP synthases have 2 components, the catalytic core F(1) and the membrane-embedded component F(0), linked together by a central stalk and a peripheral stalk. The central stalk, also called rotor shaft, is often seen as part of F(1). The peripheral stalk is seen as part of F(0). F(0) contains the membrane channel next to the rotor. F-type ATP synthases form dimers but each monomer functions independently in ATP generation. The dimer consists of 18 different polypeptides: ATP1 (subunit alpha, part of F(1), 3 molecules per monomer), ATP2 (subunit beta, part of F(1), 3 molecules per monomer), ATP3 (subunit gamma, part of the central stalk), ATP4 (subunit b, part of the peripheral stalk), ATP5/OSCP (subunit 5/OSCP, part of the peripheral stalk), ATP6 (subunit a, part of the peripheral stalk), ATP7 (subunit d, part of the peripheral stalk), ATP8 (subunit 8, part of the peripheral stalk), OLI1 (subunit c, part of the rotor, 10 molecules per monomer), ATP14 (subunit H, part of the peripheral stalk), ATP15 (subunit epsilon, part of the central stalk), ATP16 (subunit delta, part of the central stalk), ATP17 (subunit f, part of the peripheral stalk), ATP18 (subunit i/j, part of the peripheral stalk). Dimer-specific subunits are ATP19 (subunit k, at interface between monomers), ATP20 (subunit g, at interface between monomers), TIM11 (subunit e, at interface between monomers). Also contains subunit L.

The protein resides in the mitochondrion inner membrane. In terms of biological role, mitochondrial membrane ATP synthase (F(1)F(0) ATP synthase or Complex V) produces ATP from ADP in the presence of a proton gradient across the membrane which is generated by electron transport complexes of the respiratory chain. F-type ATP synthases consist of two structural domains, F(1) - containing the extramembraneous catalytic core, and F(0) - containing the membrane proton channel, linked together by a central stalk and a peripheral stalk. During catalysis, ATP synthesis in the catalytic domain of F(1) is coupled via a rotary mechanism of the central stalk subunits to proton translocation. Part of the peripheral stalk. This chain is ATP synthase subunit H, mitochondrial, found in Pichia angusta (Yeast).